Reading from the N-terminus, the 96-residue chain is UPF0235 protein Sputcn32_2690 (96 aa).

It belongs to the UPF0235 family.

This Shewanella putrefaciens (strain CN-32 / ATCC BAA-453) protein is UPF0235 protein Sputcn32_2690.